The sequence spans 233 residues: 5'-methylthioadenosine/S-adenosylhomocysteine nucleosidase (233 aa).

Glutamate 12 (proton acceptor) is an active-site residue. Substrate is bound by residues glycine 78, isoleucine 152, and 173-174; that span reads ME. The active-site Proton donor is aspartate 197.

It belongs to the PNP/UDP phosphorylase family. MtnN subfamily. Homodimer.

The enzyme catalyses S-adenosyl-L-homocysteine + H2O = S-(5-deoxy-D-ribos-5-yl)-L-homocysteine + adenine. It catalyses the reaction S-methyl-5'-thioadenosine + H2O = 5-(methylsulfanyl)-D-ribose + adenine. The catalysed reaction is 5'-deoxyadenosine + H2O = 5-deoxy-D-ribose + adenine. It functions in the pathway amino-acid biosynthesis; L-methionine biosynthesis via salvage pathway; S-methyl-5-thio-alpha-D-ribose 1-phosphate from S-methyl-5'-thioadenosine (hydrolase route): step 1/2. In terms of biological role, catalyzes the irreversible cleavage of the glycosidic bond in both 5'-methylthioadenosine (MTA) and S-adenosylhomocysteine (SAH/AdoHcy) to adenine and the corresponding thioribose, 5'-methylthioribose and S-ribosylhomocysteine, respectively. Also cleaves 5'-deoxyadenosine, a toxic by-product of radical S-adenosylmethionine (SAM) enzymes, into 5-deoxyribose and adenine. Thus, is required for in vivo function of the radical SAM enzymes biotin synthase and lipoic acid synthase, that are inhibited by 5'-deoxyadenosine accumulation. In Yersinia enterocolitica serotype O:8 / biotype 1B (strain NCTC 13174 / 8081), this protein is 5'-methylthioadenosine/S-adenosylhomocysteine nucleosidase.